Reading from the N-terminus, the 454-residue chain is MLQVLRVSAPCFAFVDTIGSIGVCRVVRFTTFHNTPIEVYNKKVNDGVWKRDPYQETAVKAINRLYTELESYTQPPITQDSMPAEKGSILSWISPLKKMFSRKKSPTLTSSLPVPGMPKGIYLYGDVGCGKTALMDLFYHNLPPNVTRSQRIHFHAFMMQVHRTSHDLQDRYGFEIDFIDHIASGIAKETTVLCFDELQVTDVADALLLRRLFEALMKYGVVIFITSNRAPSDLYKNGIQRESFIPCIKLLEHRLQVICLDSPNDYRRLKSKTEDTYLYPANSPEVKKALENWFLCYADEKDPAHQDEVEVFGRKIIVPKASGNVAWFTFEQLCGEPKSAADYLSLASRYHVFIVSDIPKLSIESKDLIHRFITFIDALYDTHGKLILSSEVPVQEIYPTAPSEVLSSTADPAAKGKIESHYHGAFGGIEEVFTFTRCLSRLSEMKKQSWIHSP.

An ATP-binding site is contributed by 125-132 (GDVGCGKT).

It belongs to the AFG1 ATPase family.

This is an uncharacterized protein from Schizosaccharomyces pombe (strain 972 / ATCC 24843) (Fission yeast).